A 310-amino-acid chain; its full sequence is p-hydroxybenzoic acid efflux pump subunit AaeA (310 aa).

The chain crosses the membrane as a helical span at residues 12 to 32; it reads AITVILVILAFVAIFRAWVYY.

The protein belongs to the membrane fusion protein (MFP) (TC 8.A.1) family.

The protein resides in the cell inner membrane. In terms of biological role, forms an efflux pump with AaeB. The polypeptide is p-hydroxybenzoic acid efflux pump subunit AaeA (Klebsiella pneumoniae (strain 342)).